The chain runs to 336 residues: CST complex subunit STN1 (336 aa).

Positions 49-126 (VDILGTVVCV…EVVASIFYKV (78 aa)) form a DNA-binding region, OB. Winged helix-turn-helix (wHTH) stretches follow at residues 162–263 (QSQE…YVTD) and 264–336 (HDKE…YTAF).

It belongs to the CTC1 family. Component of the CST complex.

The protein resides in the nucleus. The protein localises to the chromosome. It is found in the telomere. In terms of biological role, component of the CST complex proposed to act as a specialized replication factor promoting DNA replication under conditions of replication stress or natural replication barriers such as the telomere duplex. The CST complex binds single-stranded DNA with high affinity in a sequence-independent manner, while isolated subunits bind DNA with low affinity by themselves. Initially the CST complex has been proposed to protect telomeres from DNA degradation. However, the CST complex has been shown to be involved in several aspects of telomere replication. This chain is CST complex subunit STN1, found in Aquarana catesbeiana (American bullfrog).